Consider the following 493-residue polypeptide: MSLLKMEYNLYTELKKMTCGQSLSLFNEDGDFVEVEPGSSFKFLIPKGFYSSPSVKTSLVFDTLTTTDNKITSINPTNAPKLYPIQCKVVSEVVSNMRKMIELKRPLYITLHLACGFGKTITTCYLMAIHGRKTVICVPNKMLIHQWKTQVEAVGLEHKISIDGVSILLKELKTQSPDVLIVVSRHLTNDAFCKYINKHYDLFILDESHTYNLMNNTAVTRFLAYYPPMMCYFLTATPRPSNRIYCNSIINIAKLSDLKKTIYVVDSFFEPYSTDNIRHMIKRLDGASNKYHIYTEKLLSVDEPRNQLILNTLVEEFKSGTINRILVITKLREHMVLFYKRLLNLFGPEVVFIGDAQNRRTPDMVKSIKELNRFIFVSTLFYSGTGLDIPSLDSLFICSAVINNMQIEQLLGRVCRETALLDRRVYVFPNTSIKEIKYMIGNFVQRIISLSVDKLGFKQESYRKHQESDPTSACTTSSREERVLNRIFNSQNR.

The 157-residue stretch at 100-256 folds into the Helicase ATP-binding domain; sequence MIELKRPLYI…NSIINIAKLS (157 aa). 113 to 120 contributes to the ATP binding site; sequence LACGFGKT. The DESH box signature appears at 206–209; sequence DESH.

Belongs to the helicase family. Poxviruses subfamily. As to quaternary structure, interacts with G2. Might be part of a transcription complex composed at least of G2, A18, and H5.

It is found in the virion. In terms of biological role, DNA helicase which seems to act as a postreplicative transcription termination factor. Involved in ATP-dependent release of nascent RNA. Forms a stable complex with single-stranded DNA, and to a lesser extent RNA. The polypeptide is Transcript termination protein A18 (Camelus).